Consider the following 903-residue polypeptide: Protein translocase subunit SecA (903 aa).

Residues Q87, 105 to 109 (GEGKT), and D507 contribute to the ATP site. 2 disordered regions span residues 565 to 584 (ESRRIDNQLRGRSGRQGDPG) and 855 to 877 (AEPGSALGDDEDNPLSPEALASQ). Zn(2+)-binding residues include C887, C889, C898, and H899.

This sequence belongs to the SecA family. In terms of assembly, monomer and homodimer. Part of the essential Sec protein translocation apparatus which comprises SecA, SecYEG and auxiliary proteins SecDF-YajC and YidC. Zn(2+) is required as a cofactor.

It localises to the cell inner membrane. Its subcellular location is the cytoplasm. It carries out the reaction ATP + H2O + cellular proteinSide 1 = ADP + phosphate + cellular proteinSide 2.. Its function is as follows. Part of the Sec protein translocase complex. Interacts with the SecYEG preprotein conducting channel. Has a central role in coupling the hydrolysis of ATP to the transfer of proteins into and across the cell membrane, serving both as a receptor for the preprotein-SecB complex and as an ATP-driven molecular motor driving the stepwise translocation of polypeptide chains across the membrane. The polypeptide is Protein translocase subunit SecA (Chromobacterium violaceum (strain ATCC 12472 / DSM 30191 / JCM 1249 / CCUG 213 / NBRC 12614 / NCIMB 9131 / NCTC 9757 / MK)).